Consider the following 932-residue polypeptide: Protein hir1 (932 aa).

WD repeat units lie at residues 16-55 (GHRL…RENE), 72-111 (THTG…PGLG), 132-171 (GHDN…RLKR), 174-213 (AHQS…IEKT), 222-265 (PLST…SEIN), 268-316 (GHEG…PLLS), and 320-361 (VFQK…DMVS). Composition is skewed to polar residues over residues 405–426 (STTD…QKTP) and 441–453 (TVDT…SKEQ). Disordered regions lie at residues 405 to 470 (STTD…NEIP) and 498 to 520 (TPST…LPPQ). Residues 498 to 507 (TPSTSRLAST) show a composition bias toward low complexity.

This sequence belongs to the WD repeat HIR1 family. As to quaternary structure, interacts with his3 and slm9.

Its subcellular location is the cytoplasm. It is found in the nucleus. In terms of biological role, probably required for replication-independent chromatin assembly. Required for transcriptional silencing in the outer repeat (otr) centromeric repeats and the Tf2 long terminal repeat retrotransposons. Repressor of histone gene transcription in G1 arrested cells. Required for repression of htb1 gene expression outside of S phase. In Schizosaccharomyces pombe (strain 972 / ATCC 24843) (Fission yeast), this protein is Protein hir1 (hip1).